The following is a 208-amino-acid chain: ATP-dependent Clp protease proteolytic subunit (208 aa).

Catalysis depends on S98, which acts as the Nucleophile. Residue H123 is part of the active site.

Belongs to the peptidase S14 family. In terms of assembly, fourteen ClpP subunits assemble into 2 heptameric rings which stack back to back to give a disk-like structure with a central cavity, resembling the structure of eukaryotic proteasomes.

It is found in the cytoplasm. The enzyme catalyses Hydrolysis of proteins to small peptides in the presence of ATP and magnesium. alpha-casein is the usual test substrate. In the absence of ATP, only oligopeptides shorter than five residues are hydrolyzed (such as succinyl-Leu-Tyr-|-NHMec, and Leu-Tyr-Leu-|-Tyr-Trp, in which cleavage of the -Tyr-|-Leu- and -Tyr-|-Trp bonds also occurs).. Its function is as follows. Cleaves peptides in various proteins in a process that requires ATP hydrolysis. Has a chymotrypsin-like activity. Plays a major role in the degradation of misfolded proteins. This chain is ATP-dependent Clp protease proteolytic subunit, found in Wolbachia pipientis subsp. Culex pipiens (strain wPip).